The sequence spans 404 residues: Glucose-1-phosphate adenylyltransferase (404 aa).

Residues tyrosine 99, glycine 164, 179–180 (EK), and serine 197 contribute to the alpha-D-glucose 1-phosphate site.

This sequence belongs to the bacterial/plant glucose-1-phosphate adenylyltransferase family. Homotetramer.

The enzyme catalyses alpha-D-glucose 1-phosphate + ATP + H(+) = ADP-alpha-D-glucose + diphosphate. The protein operates within glycan biosynthesis; glycogen biosynthesis. Functionally, involved in the biosynthesis of ADP-glucose, a building block required for the elongation reactions to produce glycogen. Catalyzes the reaction between ATP and alpha-D-glucose 1-phosphate (G1P) to produce pyrophosphate and ADP-Glc. The chain is Glucose-1-phosphate adenylyltransferase from Nocardia farcinica (strain IFM 10152).